We begin with the raw amino-acid sequence, 489 residues long: CUGBP Elav-like family member 1-A (489 aa).

3 RRM domains span residues 16–99, 108–188, and 404–482; these read IKMF…PADS, RKLF…FADT, and ANLF…LKRS. The interval 183-210 is necessary for oligomerization and EDEN-dependent deadenylation; sequence VKFADTQKDKEQKRMTQQLQQQMQQLNA.

This sequence belongs to the CELF/BRUNOL family. In terms of assembly, oligomer. Oligomerization is required for RNA-binding and EDEN-dependent deadenylation. In terms of processing, phosphorylated during oocyte maturation and dephosphorylated following egg activation. Dephosphorylation is calcium dependent and correlates with the increase in the activity of EDEN-dependent deadenylation.

It localises to the nucleus. The protein localises to the cytoplasm. Its function is as follows. RNA-binding protein implicated in the regulation of several post-transcriptional events. May be involved in pre-mRNA alternative splicing, mRNA translation activation and stability. Mediates the rapid and sequence-specific cytoplasmic deadenylation of EDEN-containing maternal mRNAs following fertilization. Binds to AU-rich sequences (AREs) of jun mRNA. Binds to the embryonic deadenylation element (EDEN) motif localized in the 3'-UTR of maternal mRNAs. Binds to RNA containing several repeats of the consensus sequence 5'-UGU-3'. EDEN-dependent deadenylation is enhanced by the presence of an additional cis element composed of three AUU repeats. The chain is CUGBP Elav-like family member 1-A (cugbp1-a) from Xenopus laevis (African clawed frog).